A 282-amino-acid chain; its full sequence is Acetyl-coenzyme A carboxylase carboxyl transferase subunit beta 1 (282 aa).

The region spanning 23 to 282 is the CoA carboxyltransferase N-terminal domain; it reads LMTKCPECRH…MHTKGGVQHV (260 aa). Zn(2+) is bound by residues cysteine 27, cysteine 30, cysteine 46, and cysteine 49. A C4-type zinc finger spans residues 27–49; it reads CPECRHILLTKELEKNHKVCTKC.

This sequence belongs to the AccD/PCCB family. Acetyl-CoA carboxylase is a heterohexamer composed of biotin carboxyl carrier protein (AccB), biotin carboxylase (AccC) and two subunits each of ACCase subunit alpha (AccA) and ACCase subunit beta (AccD). Zn(2+) serves as cofactor.

The protein localises to the cytoplasm. It catalyses the reaction N(6)-carboxybiotinyl-L-lysyl-[protein] + acetyl-CoA = N(6)-biotinyl-L-lysyl-[protein] + malonyl-CoA. It participates in lipid metabolism; malonyl-CoA biosynthesis; malonyl-CoA from acetyl-CoA: step 1/1. Functionally, component of the acetyl coenzyme A carboxylase (ACC) complex. Biotin carboxylase (BC) catalyzes the carboxylation of biotin on its carrier protein (BCCP) and then the CO(2) group is transferred by the transcarboxylase to acetyl-CoA to form malonyl-CoA. In Lysinibacillus sphaericus (strain C3-41), this protein is Acetyl-coenzyme A carboxylase carboxyl transferase subunit beta 1.